Consider the following 261-residue polypeptide: Probable pectin methylesterase CGR2 (261 aa).

The Cytoplasmic segment spans residues 1 to 35 (MARRQVGSTRRVGDGGSFPFAGALHSKSRSSPLLS). A helical membrane pass occupies residues 36–56 (ICLVLVGACLLIGYAYSGPGI). At 57–261 (FKSIKEVSKV…CQVFHLKPLH (205 aa)) the chain is on the lumenal side. N174 is a glycosylation site (N-linked (GlcNAc...) asparagine).

Belongs to the class I-like SAM-binding methyltransferase superfamily.

The protein localises to the golgi apparatus membrane. Its function is as follows. Together with CGR3, required for homogalacturonan pectins (HG) methylesterification in the Golgi apparatus prior to integration into cell walls, essential for general growth and development. Promotes rosette growth. Impacts carbon (C) partitioning, photosynthesis and respiration efficiency by influencing leaf mesophyll cell walls morphology and physiology; pectin methylesterification modulates both expansion and positioning of cells in leaves, probably by changing cell walls plasticity. This is Probable pectin methylesterase CGR2 from Arabidopsis thaliana (Mouse-ear cress).